A 498-amino-acid chain; its full sequence is Transcription factor bHLH78 (498 aa).

Disordered regions lie at residues 1 to 24 (MDNE…FEHQ) and 207 to 297 (LVSP…PPKD). Positions 233–246 (NPISTASPSPSFSK) are enriched in polar residues. Residues 259-270 (SSEEKGGKRRRE) show a composition bias toward basic and acidic residues. Acidic residues predominate over residues 271–281 (EEDDEEEEGEG). The 51-residue stretch at 307–357 (QATDSHSLAERVRREKIGERMKLLQDLVPGCNKVTGKALMLDEIINYVQSL) folds into the bHLH domain.

In terms of assembly, homodimer. Binds reversibly to CRY2 after blue light illumination. In terms of tissue distribution, expressed constitutively in roots, leaves, stems, and flowers.

The protein localises to the nucleus. Functionally, transcription factor that binds DNA to G box 5'-CACGTG-3' and to E-box 5'-CANNTG-3'. Binds to chromatin DNA of the FT gene and promotes its expression, and thus triggers flowering in response to blue light. The protein is Transcription factor bHLH78 (BHLH78) of Arabidopsis thaliana (Mouse-ear cress).